We begin with the raw amino-acid sequence, 542 residues long: MDTVHRDKDQVVILKKANYLPYLVNLFIPKLFYPEKIVVARLYLDVNKHDKQAAENFEGTETPCFDVPPSLFADKVPMDKIVFLPTSMLPMGFEAGGVFGPGILTRRSYPIDLKAAGHKGQTPPLFVGLRMEVQPPTRVESLLKKDGESQPIQDTLMNWLHASNDLINGAQPKGQELRDEFSLSMVFNLPIPPSPPSPYSYGRIPLQCNIYTPDLSNVLLLMSHQRDLTVAILSTVNNPHVPSVAFATMGDDAECPKFELPIGVFPICEGVNRPIFLPKRFMPKGFEAGCVIKPGTLSELWFMDYIGRFGPPQPQYNGSITPPLFVGKICREEPAVDMIKKIQFEIEKKASDDAESKATLAGVKPKFDISITKGFMVMETKEPKSPKGAYSVQNYDEAFDDGCIVRVVKKPATAEEATETRERNEMCTVGDQSQELDKCSTEADQKYLSCFHVDSDIDNIAMAMARLGIADMSLHADEEELCGIDGDNALIQLRHVLEDRNQIRSHTDQLMQDHIFRMNRDRMLALRQPFTCFGCGIHEKKQ.

Belongs to the DM7 family.

The polypeptide is DM7 family protein CG15333 (Drosophila melanogaster (Fruit fly)).